Consider the following 275-residue polypeptide: tRNA (guanine-N(1)-)-methyltransferase (275 aa).

Residues Gly-139 and 159–164 (IGDYIL) each bind S-adenosyl-L-methionine.

Belongs to the RNA methyltransferase TrmD family. As to quaternary structure, homodimer.

It is found in the cytoplasm. The enzyme catalyses guanosine(37) in tRNA + S-adenosyl-L-methionine = N(1)-methylguanosine(37) in tRNA + S-adenosyl-L-homocysteine + H(+). Specifically methylates guanosine-37 in various tRNAs. This chain is tRNA (guanine-N(1)-)-methyltransferase, found in Lachnoclostridium phytofermentans (strain ATCC 700394 / DSM 18823 / ISDg) (Clostridium phytofermentans).